The sequence spans 212 residues: Uridine kinase (212 aa).

ATP is bound at residue 13–20; that stretch reads GASASGKS.

Belongs to the uridine kinase family.

It is found in the cytoplasm. The enzyme catalyses uridine + ATP = UMP + ADP + H(+). The catalysed reaction is cytidine + ATP = CMP + ADP + H(+). Its pathway is pyrimidine metabolism; CTP biosynthesis via salvage pathway; CTP from cytidine: step 1/3. It functions in the pathway pyrimidine metabolism; UMP biosynthesis via salvage pathway; UMP from uridine: step 1/1. This chain is Uridine kinase, found in Shewanella baltica (strain OS223).